Here is a 137-residue protein sequence, read N- to C-terminus: NADH dehydrogenase [ubiquinone] 1 beta subcomplex subunit 7 (137 aa).

Gly-2 carries the N-myristoyl glycine lipid modification. A CHCH domain is found at 56-98 (RDYCAHYLIRLLKCKRDSFPNFLACKQERHDWDYCEHRDYVMR). A Cx9C motif 1 motif is present at residues 59–69 (CAHYLIRLLKC). 2 disulfide bridges follow: Cys-59–Cys-90 and Cys-69–Cys-80. Ser-73 is subject to Phosphoserine. A Cx9C motif 2 motif is present at residues 80–90 (CKQERHDWDYC). Residues 113 to 137 (KRREKKAAELAKGQGPGEVDPKVAL) form a disordered region.

The protein belongs to the complex I NDUFB7 subunit family. As to quaternary structure, complex I is composed of 45 different subunits.

Its subcellular location is the mitochondrion inner membrane. The protein localises to the mitochondrion intermembrane space. Accessory subunit of the mitochondrial membrane respiratory chain NADH dehydrogenase (Complex I), that is believed not to be involved in catalysis. Complex I functions in the transfer of electrons from NADH to the respiratory chain. The immediate electron acceptor for the enzyme is believed to be ubiquinone. The chain is NADH dehydrogenase [ubiquinone] 1 beta subcomplex subunit 7 (NDUFB7) from Gorilla gorilla gorilla (Western lowland gorilla).